Here is a 256-residue protein sequence, read N- to C-terminus: Type III pantothenate kinase (256 aa).

6-13 contributes to the ATP binding site; it reads DIGNTHIV. Substrate is bound at residue 109 to 112; that stretch reads GADR. Aspartate 111 (proton acceptor) is an active-site residue. Aspartate 132 contacts K(+). Threonine 135 serves as a coordination point for ATP. Threonine 186 contributes to the substrate binding site.

This sequence belongs to the type III pantothenate kinase family. As to quaternary structure, homodimer. Requires NH4(+) as cofactor. The cofactor is K(+).

The protein resides in the cytoplasm. The enzyme catalyses (R)-pantothenate + ATP = (R)-4'-phosphopantothenate + ADP + H(+). Its pathway is cofactor biosynthesis; coenzyme A biosynthesis; CoA from (R)-pantothenate: step 1/5. Its function is as follows. Catalyzes the phosphorylation of pantothenate (Pan), the first step in CoA biosynthesis. This Fusobacterium nucleatum subsp. nucleatum (strain ATCC 25586 / DSM 15643 / BCRC 10681 / CIP 101130 / JCM 8532 / KCTC 2640 / LMG 13131 / VPI 4355) protein is Type III pantothenate kinase.